Here is a 668-residue protein sequence, read N- to C-terminus: Fe(2+) transporter FeoB (668 aa).

Positions 3–165 (SYEIALIGNP…KKAISIAVKD (163 aa)) constitute a FeoB-type G domain. 10–17 (GNPNVGKS) provides a ligand contact to GTP. Residues Asn21, Ala22, Thr24, and Gly25 each contribute to the Mg(2+) site. GTP-binding positions include 35–39 (GVTVE), 56–59 (DLPG), 116–119 (NKMD), and 145–147 (SAA). 8 helical membrane passes run 344–364 (VGAVLVFFPILAFLFFAISFL), 386–406 (LPGKAVISMVMGFGCNVPAIM), 418–438 (ILTILINPLLSCSARLPIYAL), 450–470 (VVILSMYALGVVLALITAFLF), 515–535 (IIVFGVILVWVLSVYGPSGYL), 574–594 (ALVFGIIAKEVVVGSLAMLYG), 613–633 (AYAFMAFSLIYLPCIATLAVI), and 643–663 (LFAVTYEMILAYVVALVISVI).

Belongs to the TRAFAC class TrmE-Era-EngA-EngB-Septin-like GTPase superfamily. FeoB GTPase (TC 9.A.8) family. In terms of assembly, the crystallized N-terminal domain is a homodimer.

It localises to the cell membrane. In terms of biological role, probable transporter of a GTP-driven Fe(2+) uptake system, might be able to transport Fe(2+) into or out of the cell. This is Fe(2+) transporter FeoB from Methanocaldococcus jannaschii (strain ATCC 43067 / DSM 2661 / JAL-1 / JCM 10045 / NBRC 100440) (Methanococcus jannaschii).